A 570-amino-acid polypeptide reads, in one-letter code: Urease subunit alpha (570 aa).

In terms of domain architecture, Urease spans Gly131–Phe570. The Ni(2+) site is built by His136, His138, and Lys219. Lys219 is subject to N6-carboxylysine. His221 is a binding site for substrate. Residues His248 and His274 each coordinate Ni(2+). His322 (proton donor) is an active-site residue. Asp362 is a binding site for Ni(2+).

This sequence belongs to the metallo-dependent hydrolases superfamily. Urease alpha subunit family. Heterotrimer of UreA (gamma), UreB (beta) and UreC (alpha) subunits. Three heterotrimers associate to form the active enzyme. Ni cation is required as a cofactor. In terms of processing, carboxylation allows a single lysine to coordinate two nickel ions.

Its subcellular location is the cytoplasm. The catalysed reaction is urea + 2 H2O + H(+) = hydrogencarbonate + 2 NH4(+). The protein operates within nitrogen metabolism; urea degradation; CO(2) and NH(3) from urea (urease route): step 1/1. This chain is Urease subunit alpha, found in Beijerinckia indica subsp. indica (strain ATCC 9039 / DSM 1715 / NCIMB 8712).